An 81-amino-acid chain; its full sequence is Short neurotoxin B (81 aa).

An N-terminal signal peptide occupies residues 1 to 21 (MKTLLLTLVVVTIVCLDLGYT). 4 disulfides stabilise this stretch: Cys24–Cys43, Cys38–Cys60, Cys62–Cys73, and Cys74–Cys79.

The protein belongs to the three-finger toxin family. Short-chain subfamily. Type I alpha-neurotoxin sub-subfamily. Expressed by the venom gland.

The protein localises to the secreted. In terms of biological role, binds to muscle nicotinic acetylcholine receptor (nAChR) and inhibit acetylcholine from binding to the receptor, thereby impairing neuromuscular transmission. The protein is Short neurotoxin B of Aipysurus laevis (Olive sea snake).